Consider the following 369-residue polypeptide: Coproporphyrin III ferrochelatase (369 aa).

Ser-61 and Tyr-130 together coordinate Fe-coproporphyrin III. Fe(2+) is bound by residues His-197 and Glu-286.

It belongs to the ferrochelatase family.

Its subcellular location is the cytoplasm. The catalysed reaction is Fe-coproporphyrin III + 2 H(+) = coproporphyrin III + Fe(2+). Its pathway is porphyrin-containing compound metabolism; protoheme biosynthesis. Involved in coproporphyrin-dependent heme b biosynthesis. Catalyzes the insertion of ferrous iron into coproporphyrin III to form Fe-coproporphyrin III. The chain is Coproporphyrin III ferrochelatase from Corynebacterium diphtheriae (strain ATCC 700971 / NCTC 13129 / Biotype gravis).